The following is an 883-amino-acid chain: Translation initiation factor IF-2 (883 aa).

The disordered stretch occupies residues 118 to 261 (VARESEAAPA…KKKEAFKKTE (144 aa)). The segment covering 124–150 (AAPAEEPVAAAVKPASEPPVVQKAPVA) has biased composition (low complexity). Basic and acidic residues-rich tracts occupy residues 183–200 (PADR…EERI) and 252–261 (KKKEAFKKTE). The region spanning 383 to 552 (KRPPVVTIMG…LLQADVMDLK (170 aa)) is the tr-type G domain. The tract at residues 392–399 (GHVDHGKT) is G1. 392 to 399 (GHVDHGKT) contributes to the GTP binding site. Positions 417–421 (GITQH) are G2. Positions 438-441 (DTPG) are G3. GTP contacts are provided by residues 438–442 (DTPGH) and 492–495 (NKID). Residues 492–495 (NKID) are G4. The interval 528 to 530 (SAK) is G5.

It belongs to the TRAFAC class translation factor GTPase superfamily. Classic translation factor GTPase family. IF-2 subfamily.

It is found in the cytoplasm. Its function is as follows. One of the essential components for the initiation of protein synthesis. Protects formylmethionyl-tRNA from spontaneous hydrolysis and promotes its binding to the 30S ribosomal subunits. Also involved in the hydrolysis of GTP during the formation of the 70S ribosomal complex. The polypeptide is Translation initiation factor IF-2 (Geobacter sulfurreducens (strain ATCC 51573 / DSM 12127 / PCA)).